The following is a 714-amino-acid chain: Cell wall protein IFF7 (714 aa).

Residues 1–19 form the signal peptide; it reads MLFTLSILSTLLFSTSISA. An N-linked (GlcNAc...) asparagine glycan is attached at asparagine 200. A compositionally biased stretch (polar residues) spans 320 to 330; sequence GPVPSQKSLPS. Disordered stretches follow at residues 320–633 and 660–692; these read GPVP…AADS and PIAN…ANGS. The segment covering 346–504 has biased composition (low complexity); it reads GSSSSSSVVS…SSTPLSGDSS (159 aa). Asparagine 390, asparagine 394, asparagine 399, asparagine 421, and asparagine 473 each carry an N-linked (GlcNAc...) asparagine glycan. Residues 505–519 show a composition bias toward polar residues; sequence QVSSLTTGTSPDTIA. Over residues 520–544 the composition is skewed to low complexity; it reads SFQTDSTSFGFGSGSPSSGAVQSSG. The segment covering 545–558 has biased composition (polar residues); the sequence is VTNSTPNTGDVNTQ. Composition is skewed to low complexity over residues 559 to 590 and 597 to 625; these read SNTA…TTTG and NNNN…NTNN. N-linked (GlcNAc...) asparagine glycosylation is found at asparagine 577, asparagine 621, asparagine 624, and asparagine 663. Residues 665–679 are compositionally biased toward low complexity; the sequence is SSSPSSSSSSSSSSS. Asparagine 690 carries an N-linked (GlcNAc...) asparagine glycan. Asparagine 690 is lipidated: GPI-anchor amidated asparagine. Positions 691–714 are cleaved as a propeptide — removed in mature form; that stretch reads GSSKLSIGMTFMISGFATMFALFM.

It belongs to the HYR1/IFF family. The GPI-anchor is attached to the protein in the endoplasmic reticulum and serves to target the protein to the cell surface. There, the glucosamine-inositol phospholipid moiety is cleaved off and the GPI-modified mannoprotein is covalently attached via its lipidless GPI glycan remnant to the 1,6-beta-glucan of the outer cell wall layer.

It localises to the secreted. It is found in the cell wall. Its subcellular location is the membrane. Functionally, GPI-anchored cell wall protein involved in cell wall organization, hyphal growth, as well as in host-fungal interaction and virulence. In Candida albicans (strain SC5314 / ATCC MYA-2876) (Yeast), this protein is Cell wall protein IFF7 (IFF8).